Reading from the N-terminus, the 96-residue chain is Large ribosomal subunit protein bL27 (96 aa).

Residues 1–9 constitute a propeptide that is removed on maturation; it reads MLRLDLQFF. The interval 1–36 is disordered; that stretch reads MLRLDLQFFSTKKGQGSSKNGRDSESKRLGSKRADG. Residues 8–19 are compositionally biased toward polar residues; it reads FFSTKKGQGSSK. The span at 20 to 35 shows a compositional bias: basic and acidic residues; the sequence is NGRDSESKRLGSKRAD.

The protein belongs to the bacterial ribosomal protein bL27 family. The N-terminus is cleaved by ribosomal processing cysteine protease Prp.

This Oceanobacillus iheyensis (strain DSM 14371 / CIP 107618 / JCM 11309 / KCTC 3954 / HTE831) protein is Large ribosomal subunit protein bL27.